Reading from the N-terminus, the 540-residue chain is Putative actin-fragmin kinase DDB_G0287957 (540 aa).

Positions Lys27–Asn68 form a coiled coil. Disordered stretches follow at residues Ile37–Asn70 and Asn317–Cys341.

It belongs to the protein kinase superfamily. AFK Ser/Thr protein kinase family.

This chain is Putative actin-fragmin kinase DDB_G0287957, found in Dictyostelium discoideum (Social amoeba).